The primary structure comprises 309 residues: Homoserine kinase (309 aa).

95-105 (PHGRGLGSSSA) lines the ATP pocket.

It belongs to the GHMP kinase family. Homoserine kinase subfamily.

Its subcellular location is the cytoplasm. It catalyses the reaction L-homoserine + ATP = O-phospho-L-homoserine + ADP + H(+). The protein operates within amino-acid biosynthesis; L-threonine biosynthesis; L-threonine from L-aspartate: step 4/5. Functionally, catalyzes the ATP-dependent phosphorylation of L-homoserine to L-homoserine phosphate. In Streptomyces coelicolor (strain ATCC BAA-471 / A3(2) / M145), this protein is Homoserine kinase.